The sequence spans 370 residues: 3-isopropylmalate dehydrogenase (370 aa).

76–89 (GPKWDQNPSELRPE) serves as a coordination point for NAD(+). 4 residues coordinate substrate: arginine 96, arginine 106, arginine 134, and aspartate 224. Residues aspartate 224, aspartate 248, and aspartate 252 each coordinate Mg(2+). Residue 282 to 294 (GSAPDIAGQNIAN) participates in NAD(+) binding.

This sequence belongs to the isocitrate and isopropylmalate dehydrogenases family. LeuB type 1 subfamily. Homodimer. Mg(2+) is required as a cofactor. It depends on Mn(2+) as a cofactor.

Its subcellular location is the cytoplasm. It catalyses the reaction (2R,3S)-3-isopropylmalate + NAD(+) = 4-methyl-2-oxopentanoate + CO2 + NADH. Its pathway is amino-acid biosynthesis; L-leucine biosynthesis; L-leucine from 3-methyl-2-oxobutanoate: step 3/4. Functionally, catalyzes the oxidation of 3-carboxy-2-hydroxy-4-methylpentanoate (3-isopropylmalate) to 3-carboxy-4-methyl-2-oxopentanoate. The product decarboxylates to 4-methyl-2 oxopentanoate. This Bacillus licheniformis (strain ATCC 14580 / DSM 13 / JCM 2505 / CCUG 7422 / NBRC 12200 / NCIMB 9375 / NCTC 10341 / NRRL NRS-1264 / Gibson 46) protein is 3-isopropylmalate dehydrogenase.